A 207-amino-acid chain; its full sequence is MLSVFGLRTVARCNSTLASGGARAAAAAGGKAGAQYSALPKSVHALYFQPLKLPVKHHDLVADLQLRAFDNQSLDFFANFALRVGYYLGIPMTGPKPLPTRRERWTVIRAPFAHAKSKENFERHTHKRLLRLWDANPEVVEMFLSYITKHSMAGVGMKCNMFQRESVQLAQELADVPLAPGAPQTADEVVGAKVAELMQSPEFKKHL.

A mitochondrion-targeting transit peptide spans 1 to 24 (MLSVFGLRTVARCNSTLASGGARA).

The protein belongs to the universal ribosomal protein uS10 family. In terms of assembly, part of the mitochondrial small ribosomal subunit.

The protein resides in the mitochondrion. Functionally, involved in mitochondrial genome encoded proteins translation. Involved in the binding of tRNA to the ribosomes. This is Small ribosomal subunit protein uS10m (RSM10) from Eremothecium gossypii (strain ATCC 10895 / CBS 109.51 / FGSC 9923 / NRRL Y-1056) (Yeast).